The sequence spans 144 residues: MIIQTKYHGEVKIKEEQMINFSNGIPGFLDQKQFVILPLSEESPFLVLQSLKNAELGFIVSSPFLFFNQYEFDLDETVVEILEVEDANDVEVMVILTMESSIEKTTANLRAPIIVNRKNMKAKQVILHDSAYHTKHLLEVASSC.

It belongs to the FliW family. In terms of assembly, interacts with translational regulator CsrA and flagellin(s).

It is found in the cytoplasm. Its function is as follows. Acts as an anti-CsrA protein, binds CsrA and prevents it from repressing translation of its target genes, one of which is flagellin. Binds to flagellin and participates in the assembly of the flagellum. The polypeptide is Flagellar assembly factor FliW (Bacillus pumilus (strain SAFR-032)).